The following is a 391-amino-acid chain: S-adenosylmethionine synthase (391 aa).

Position 16 (H16) interacts with ATP. A Mg(2+)-binding site is contributed by D18. E44 serves as a coordination point for K(+). L-methionine contacts are provided by E57 and Q101. A flexible loop region spans residues 101 to 111 (QSADIAQGVDA). Residues 166-168 (DAK), D244, 250-251 (RK), A267, and K271 contribute to the ATP site. D244 serves as a coordination point for L-methionine. K275 serves as a coordination point for L-methionine.

It belongs to the AdoMet synthase family. In terms of assembly, homotetramer; dimer of dimers. Requires Mg(2+) as cofactor. It depends on K(+) as a cofactor.

The protein resides in the cytoplasm. It catalyses the reaction L-methionine + ATP + H2O = S-adenosyl-L-methionine + phosphate + diphosphate. The protein operates within amino-acid biosynthesis; S-adenosyl-L-methionine biosynthesis; S-adenosyl-L-methionine from L-methionine: step 1/1. Catalyzes the formation of S-adenosylmethionine (AdoMet) from methionine and ATP. The overall synthetic reaction is composed of two sequential steps, AdoMet formation and the subsequent tripolyphosphate hydrolysis which occurs prior to release of AdoMet from the enzyme. This Zymomonas mobilis subsp. mobilis (strain ATCC 31821 / ZM4 / CP4) protein is S-adenosylmethionine synthase.